The following is a 166-amino-acid chain: NADH-quinone oxidoreductase subunit E (166 aa).

[2Fe-2S] cluster is bound by residues C92, C97, C133, and C137.

It belongs to the complex I 24 kDa subunit family. In terms of assembly, composed of 13 different subunits. Subunits NuoCD, E, F, and G constitute the peripheral sector of the complex. [2Fe-2S] cluster is required as a cofactor.

The enzyme catalyses a quinone + NADH + 5 H(+)(in) = a quinol + NAD(+) + 4 H(+)(out). In terms of biological role, NDH-1 shuttles electrons from NADH, via FMN and iron-sulfur (Fe-S) centers, to quinones in the respiratory chain. The immediate electron acceptor for the enzyme in this species is believed to be ubiquinone. Couples the redox reaction to proton translocation (for every two electrons transferred, four hydrogen ions are translocated across the cytoplasmic membrane), and thus conserves the redox energy in a proton gradient. The protein is NADH-quinone oxidoreductase subunit E (nuoE) of Shigella flexneri.